The sequence spans 357 residues: D-amino-acid oxidase (357 aa).

FAD-binding residues include alanine 13, glycine 14, serine 42, glycine 47, arginine 289, glycine 315, and glycine 318. A D-proline-binding site is contributed by arginine 289. Arginine 289 is a D-serine binding site.

It belongs to the DAMOX/DASOX family. FAD serves as cofactor.

Its subcellular location is the cytoplasm. It is found in the secreted. The protein localises to the cell wall. It catalyses the reaction a D-alpha-amino acid + O2 + H2O = a 2-oxocarboxylate + H2O2 + NH4(+). The enzyme catalyses D-phenylalanine + O2 + H2O = 3-phenylpyruvate + H2O2 + NH4(+). It carries out the reaction D-lysine + O2 + H2O = 6-amino-2-oxohexanoate + H2O2 + NH4(+). The catalysed reaction is D-methionine + O2 + H2O = 4-methylsulfanyl-2-oxobutanoate + H2O2 + NH4(+). It catalyses the reaction D-arginine + O2 + H2O = 5-guanidino-2-oxopentanoate + H2O2 + NH4(+). The enzyme catalyses D-ornithine + O2 + H2O = 5-amino-2-oxopentanoate + H2O2 + NH4(+). It carries out the reaction D-leucine + O2 + H2O = 4-methyl-2-oxopentanoate + H2O2 + NH4(+). The catalysed reaction is D-histidine + O2 + H2O = 3-(imidazol-5-yl)pyruvate + H2O2 + NH4(+). Activated by manganese, copper, and iron ions. Inhibited by barium, aluminum, and zinc ions. Its function is as follows. Catalyzes the oxidative deamination of D-amino acids with broad substrate specificity. The sequence is that of D-amino-acid oxidase from Unknown prokaryotic organism.